The sequence spans 337 residues: Phenylalanine--tRNA ligase alpha subunit (337 aa).

Residue glutamate 258 coordinates Mg(2+).

Belongs to the class-II aminoacyl-tRNA synthetase family. Phe-tRNA synthetase alpha subunit type 1 subfamily. As to quaternary structure, tetramer of two alpha and two beta subunits. It depends on Mg(2+) as a cofactor.

The protein resides in the cytoplasm. The enzyme catalyses tRNA(Phe) + L-phenylalanine + ATP = L-phenylalanyl-tRNA(Phe) + AMP + diphosphate + H(+). The polypeptide is Phenylalanine--tRNA ligase alpha subunit (Burkholderia cenocepacia (strain ATCC BAA-245 / DSM 16553 / LMG 16656 / NCTC 13227 / J2315 / CF5610) (Burkholderia cepacia (strain J2315))).